The sequence spans 513 residues: Homeobox and leucine zipper protein Homez (513 aa).

Residues 31-90 (WTQAVQTSELDGNEHLLQAFSYFPYPSLADIALLCLRHGLQMEKVKTWFMAQRLRCGISW) constitute a DNA-binding region (homeobox 1). Glycyl lysine isopeptide (Lys-Gly) (interchain with G-Cter in SUMO2) cross-links involve residues Lys-156, Lys-174, and Lys-176. Disordered stretches follow at residues 200 to 221 (LSKE…ASWN), 241 to 287 (SCKE…SFSP), 303 to 328 (RLRN…HQRK), 402 to 429 (PAIS…PPPD), and 480 to 513 (LDEE…IIRD). Gly residues predominate over residues 205 to 217 (AGGGPDQSCGGGT). A compositionally biased stretch (low complexity) spans 248 to 260 (PSGTPPSSSASSP). Ser-320 is modified (phosphoserine). DNA-binding regions (homeobox) lie at residues 324–384 (QHQR…KHGQ) and 418–477 (TPPL…AEVV). Positions 327 to 332 (RKTKRK) match the Nuclear localization signal motif. Thr-418 is subject to Phosphothreonine. Over residues 419-429 (PPLPAPPPPPD) the composition is skewed to pro residues.

In terms of assembly, homodimer or heterodimer (Potential). Interacts with HOXC8.

The protein resides in the nucleus. Functionally, may function as a transcriptional regulator. The protein is Homeobox and leucine zipper protein Homez (Homez) of Rattus norvegicus (Rat).